The sequence spans 88 residues: UPF0223 protein OB1419 (88 aa).

Belongs to the UPF0223 family.

This is UPF0223 protein OB1419 from Oceanobacillus iheyensis (strain DSM 14371 / CIP 107618 / JCM 11309 / KCTC 3954 / HTE831).